A 141-amino-acid chain; its full sequence is D-aminoacyl-tRNA deacylase (141 aa).

A Gly-cisPro motif, important for rejection of L-amino acids motif is present at residues 133–134 (GP).

It belongs to the DTD family. In terms of assembly, homodimer.

The protein localises to the cytoplasm. It carries out the reaction glycyl-tRNA(Ala) + H2O = tRNA(Ala) + glycine + H(+). It catalyses the reaction a D-aminoacyl-tRNA + H2O = a tRNA + a D-alpha-amino acid + H(+). Functionally, an aminoacyl-tRNA editing enzyme that deacylates mischarged D-aminoacyl-tRNAs. Also deacylates mischarged glycyl-tRNA(Ala), protecting cells against glycine mischarging by AlaRS. Acts via tRNA-based rather than protein-based catalysis; rejects L-amino acids rather than detecting D-amino acids in the active site. By recycling D-aminoacyl-tRNA to D-amino acids and free tRNA molecules, this enzyme counteracts the toxicity associated with the formation of D-aminoacyl-tRNA entities in vivo and helps enforce protein L-homochirality. The protein is D-aminoacyl-tRNA deacylase of Thermobifida fusca (strain YX).